The chain runs to 546 residues: CTP synthase (546 aa).

The segment at Met1–Ile265 is amidoligase domain. A CTP-binding site is contributed by Ser13. Ser13 is a binding site for UTP. Residues Ser14 to Ile19 and Asp71 each bind ATP. Mg(2+)-binding residues include Asp71 and Glu139. Residues Asp146–Glu148, Lys186–Gln191, and Lys222 contribute to the CTP site. Residues Lys186–Gln191 and Lys222 contribute to the UTP site. In terms of domain architecture, Glutamine amidotransferase type-1 spans Asn290–Lys543. Gly351 provides a ligand contact to L-glutamine. Cys378 serves as the catalytic Nucleophile; for glutamine hydrolysis. L-glutamine is bound by residues Leu379–Gln382, Glu402, and Arg469. Active-site residues include His516 and Glu518.

The protein belongs to the CTP synthase family. Homotetramer.

The enzyme catalyses UTP + L-glutamine + ATP + H2O = CTP + L-glutamate + ADP + phosphate + 2 H(+). The catalysed reaction is L-glutamine + H2O = L-glutamate + NH4(+). It catalyses the reaction UTP + NH4(+) + ATP = CTP + ADP + phosphate + 2 H(+). It functions in the pathway pyrimidine metabolism; CTP biosynthesis via de novo pathway; CTP from UDP: step 2/2. Allosterically activated by GTP, when glutamine is the substrate; GTP has no effect on the reaction when ammonia is the substrate. The allosteric effector GTP functions by stabilizing the protein conformation that binds the tetrahedral intermediate(s) formed during glutamine hydrolysis. Inhibited by the product CTP, via allosteric rather than competitive inhibition. Functionally, catalyzes the ATP-dependent amination of UTP to CTP with either L-glutamine or ammonia as the source of nitrogen. Regulates intracellular CTP levels through interactions with the four ribonucleotide triphosphates. This is CTP synthase from Thiobacillus denitrificans (strain ATCC 25259 / T1).